The sequence spans 171 residues: Large ribosomal subunit protein uL5 (171 aa).

This sequence belongs to the universal ribosomal protein uL5 family. In terms of assembly, part of the 50S ribosomal subunit; contacts the 5S rRNA and probably tRNA. Forms a bridge to the 30S subunit in the 70S ribosome.

This is one of the proteins that bind and probably mediate the attachment of the 5S RNA into the large ribosomal subunit, where it forms part of the central protuberance. In the 70S ribosome it contacts protein S13 of the 30S subunit (bridge B1b), connecting the 2 subunits; this bridge is implicated in subunit movement. May contact the P site tRNA; the 5S rRNA and some of its associated proteins might help stabilize positioning of ribosome-bound tRNAs. In Methanocorpusculum labreanum (strain ATCC 43576 / DSM 4855 / Z), this protein is Large ribosomal subunit protein uL5.